We begin with the raw amino-acid sequence, 484 residues long: Acetyl-coenzyme A carboxylase carboxyl transferase subunit beta, chloroplastic (484 aa).

Positions L223–N484 constitute a CoA carboxyltransferase N-terminal domain. 4 residues coordinate Zn(2+): C227, C230, C243, and C246. A C4-type zinc finger spans residues C227–C246.

The protein belongs to the AccD/PCCB family. As to quaternary structure, acetyl-CoA carboxylase is a heterohexamer composed of biotin carboxyl carrier protein, biotin carboxylase and 2 subunits each of ACCase subunit alpha and ACCase plastid-coded subunit beta (accD). It depends on Zn(2+) as a cofactor.

The protein localises to the plastid. The protein resides in the chloroplast stroma. It carries out the reaction N(6)-carboxybiotinyl-L-lysyl-[protein] + acetyl-CoA = N(6)-biotinyl-L-lysyl-[protein] + malonyl-CoA. Its pathway is lipid metabolism; malonyl-CoA biosynthesis; malonyl-CoA from acetyl-CoA: step 1/1. Functionally, component of the acetyl coenzyme A carboxylase (ACC) complex. Biotin carboxylase (BC) catalyzes the carboxylation of biotin on its carrier protein (BCCP) and then the CO(2) group is transferred by the transcarboxylase to acetyl-CoA to form malonyl-CoA. This chain is Acetyl-coenzyme A carboxylase carboxyl transferase subunit beta, chloroplastic, found in Capsella bursa-pastoris (Shepherd's purse).